A 139-amino-acid chain; its full sequence is 3-hydroxyacyl-[acyl-carrier-protein] dehydratase FabZ (139 aa).

His-46 is a catalytic residue.

The protein belongs to the thioester dehydratase family. FabZ subfamily.

The protein resides in the cytoplasm. It carries out the reaction a (3R)-hydroxyacyl-[ACP] = a (2E)-enoyl-[ACP] + H2O. Its function is as follows. Involved in unsaturated fatty acids biosynthesis. Catalyzes the dehydration of short chain beta-hydroxyacyl-ACPs and long chain saturated and unsaturated beta-hydroxyacyl-ACPs. In Petrotoga mobilis (strain DSM 10674 / SJ95), this protein is 3-hydroxyacyl-[acyl-carrier-protein] dehydratase FabZ.